A 666-amino-acid chain; its full sequence is UvrABC system protein B (666 aa).

Residues aspartate 26 to arginine 183 form the Helicase ATP-binding domain. ATP is bound at residue glycine 39 to threonine 46. A Beta-hairpin motif is present at residues tyrosine 92–isoleucine 115. The Helicase C-terminal domain occupies glutamine 429–valine 591. A UVR domain is found at glutamate 625–asparagine 660.

Belongs to the UvrB family. As to quaternary structure, forms a heterotetramer with UvrA during the search for lesions. Interacts with UvrC in an incision complex.

It localises to the cytoplasm. In terms of biological role, the UvrABC repair system catalyzes the recognition and processing of DNA lesions. A damage recognition complex composed of 2 UvrA and 2 UvrB subunits scans DNA for abnormalities. Upon binding of the UvrA(2)B(2) complex to a putative damaged site, the DNA wraps around one UvrB monomer. DNA wrap is dependent on ATP binding by UvrB and probably causes local melting of the DNA helix, facilitating insertion of UvrB beta-hairpin between the DNA strands. Then UvrB probes one DNA strand for the presence of a lesion. If a lesion is found the UvrA subunits dissociate and the UvrB-DNA preincision complex is formed. This complex is subsequently bound by UvrC and the second UvrB is released. If no lesion is found, the DNA wraps around the other UvrB subunit that will check the other stand for damage. This chain is UvrABC system protein B, found in Leptospira borgpetersenii serovar Hardjo-bovis (strain JB197).